A 313-amino-acid polypeptide reads, in one-letter code: Porphobilinogen deaminase (313 aa).

An S-(dipyrrolylmethanemethyl)cysteine modification is found at cysteine 242.

Belongs to the HMBS family. In terms of assembly, monomer. Dipyrromethane is required as a cofactor.

It carries out the reaction 4 porphobilinogen + H2O = hydroxymethylbilane + 4 NH4(+). The protein operates within porphyrin-containing compound metabolism; protoporphyrin-IX biosynthesis; coproporphyrinogen-III from 5-aminolevulinate: step 2/4. Its function is as follows. Tetrapolymerization of the monopyrrole PBG into the hydroxymethylbilane pre-uroporphyrinogen in several discrete steps. The sequence is that of Porphobilinogen deaminase from Klebsiella pneumoniae (strain 342).